The primary structure comprises 647 residues: Threonine--tRNA ligase (647 aa).

Residues 1–61 form the TGS domain; sequence MINITFPDGA…TEDGSIEIVT (61 aa). Residues 242 to 540 are catalytic; that stretch reads DHRKLGKELD…LIENYKGAFP (299 aa). Positions 336, 387, and 517 each coordinate Zn(2+).

Belongs to the class-II aminoacyl-tRNA synthetase family. Homodimer. The cofactor is Zn(2+).

It localises to the cytoplasm. It catalyses the reaction tRNA(Thr) + L-threonine + ATP = L-threonyl-tRNA(Thr) + AMP + diphosphate + H(+). In terms of biological role, catalyzes the attachment of threonine to tRNA(Thr) in a two-step reaction: L-threonine is first activated by ATP to form Thr-AMP and then transferred to the acceptor end of tRNA(Thr). Also edits incorrectly charged L-seryl-tRNA(Thr). This Streptococcus pneumoniae (strain JJA) protein is Threonine--tRNA ligase.